The following is a 179-amino-acid chain: Prion-like protein doppel (179 aa).

The N-terminal stretch at 1–25 (MKNRLGTWWVAILCMLLASHLSTVK) is a signal peptide. The flexible tail stretch occupies residues 27 to 50 (RGIKHRFKWNRKVLPSSGGQITEA). Residues 51–155 (RVAENRPGAF…KHCDFWLERG (105 aa)) are globular. Disulfide bonds link Cys95-Cys148 and Cys109-Cys143. N-linked (GlcNAc...) asparagine glycosylation is found at Asn99 and Asn111. Positions 125–142 (KQDSKLHQRVLWRLIKEI) are cu(2+) binding. Residue Gly155 is the site of GPI-anchor amidated glycine attachment. A propeptide spans 156 to 179 (AALRVAVDQPAMVCLLGFVWFIVK) (removed in mature form).

It belongs to the prion family. N-glycosylated. N-glycosylated at two distinct sites. In terms of processing, O-glycosylated. Detected in testis. Detected within seminiferous tubules, on round and elongated spermatids (at protein level). Not detected in brain (at protein level). Detected in testis, and at low levels in heart. Expression in brain is very low and barely detectable.

Its subcellular location is the cell membrane. Its function is as follows. Required for normal acrosome reaction and for normal male fertility. Can bind Cu(2+). This is Prion-like protein doppel (Prnd) from Mus musculus (Mouse).